Consider the following 131-residue polypeptide: uncharacterized protein (131 aa).

A disordered region spans residues Met1–Tyr67. The residue at position 14 (Ser14) is a Phosphoserine. Residues Val99–Val119 form a helical membrane-spanning segment.

The protein belongs to the FAM241 family.

It is found in the membrane. This is an uncharacterized protein from Mus musculus (Mouse).